The following is a 305-amino-acid chain: tRNA dimethylallyltransferase (305 aa).

Position 8 to 15 (8 to 15 (GPTAVGKT)) interacts with ATP. 10-15 (TAVGKT) lines the substrate pocket. Residues 33–36 (DSRQ) form an interaction with substrate tRNA region.

The protein belongs to the IPP transferase family. In terms of assembly, monomer. Mg(2+) is required as a cofactor.

It catalyses the reaction adenosine(37) in tRNA + dimethylallyl diphosphate = N(6)-dimethylallyladenosine(37) in tRNA + diphosphate. Catalyzes the transfer of a dimethylallyl group onto the adenine at position 37 in tRNAs that read codons beginning with uridine, leading to the formation of N6-(dimethylallyl)adenosine (i(6)A). The polypeptide is tRNA dimethylallyltransferase (Thermotoga petrophila (strain ATCC BAA-488 / DSM 13995 / JCM 10881 / RKU-1)).